The chain runs to 208 residues: Dephospho-CoA kinase (208 aa).

One can recognise a DPCK domain in the interval 11–207 (VIGLTGGIAS…EYYLELAQHD (197 aa)). 19–24 (ASGKSA) serves as a coordination point for ATP.

It belongs to the CoaE family.

Its subcellular location is the cytoplasm. It catalyses the reaction 3'-dephospho-CoA + ATP = ADP + CoA + H(+). It functions in the pathway cofactor biosynthesis; coenzyme A biosynthesis; CoA from (R)-pantothenate: step 5/5. Functionally, catalyzes the phosphorylation of the 3'-hydroxyl group of dephosphocoenzyme A to form coenzyme A. The protein is Dephospho-CoA kinase of Hahella chejuensis (strain KCTC 2396).